We begin with the raw amino-acid sequence, 146 residues long: Cytochrome c oxidase subunit 5A, mitochondrial (146 aa).

The transit peptide at 1–37 (MLAAALRRCTAAAAARGLLHPVSAPSPAAAVCSIRCY) directs the protein to the mitochondrion. Residues 2 to 16 (LAAALRRCTAAAAAR) carry the SIFI-degron motif. Residues Lys83 and Lys109 each carry the N6-acetyllysine modification. The residue at position 137 (Thr137) is a Phosphothreonine.

In terms of assembly, component of the cytochrome c oxidase (complex IV, CIV), a multisubunit enzyme composed of 14 subunits. The complex is composed of a catalytic core of 3 subunits MT-CO1, MT-CO2 and MT-CO3, encoded in the mitochondrial DNA, and 11 supernumerary subunits COX4I, COX5A, COX5B, COX6A, COX6B, COX6C, COX7A, COX7B, COX7C, COX8 and NDUFA4, which are encoded in the nuclear genome. The complex exists as a monomer or a dimer and forms supercomplexes (SCs) in the inner mitochondrial membrane with NADH-ubiquinone oxidoreductase (complex I, CI) and ubiquinol-cytochrome c oxidoreductase (cytochrome b-c1 complex, complex III, CIII), resulting in different assemblies (supercomplex SCI(1)III(2)IV(1) and megacomplex MCI(2)III(2)IV(2)). Interacts with AFG1L. Interacts with RAB5IF. In terms of processing, in response to mitochondrial stress, the precursor protein is ubiquitinated by the SIFI complex in the cytoplasm before mitochondrial import, leading to its degradation. Within the SIFI complex, UBR4 initiates ubiquitin chain that are further elongated or branched by KCMF1. In terms of tissue distribution, expressed in the head of epididymal sperm but not in testicular sperm (at protein level).

Its subcellular location is the mitochondrion inner membrane. Its pathway is energy metabolism; oxidative phosphorylation. Component of the cytochrome c oxidase, the last enzyme in the mitochondrial electron transport chain which drives oxidative phosphorylation. The respiratory chain contains 3 multisubunit complexes succinate dehydrogenase (complex II, CII), ubiquinol-cytochrome c oxidoreductase (cytochrome b-c1 complex, complex III, CIII) and cytochrome c oxidase (complex IV, CIV), that cooperate to transfer electrons derived from NADH and succinate to molecular oxygen, creating an electrochemical gradient over the inner membrane that drives transmembrane transport and the ATP synthase. Cytochrome c oxidase is the component of the respiratory chain that catalyzes the reduction of oxygen to water. Electrons originating from reduced cytochrome c in the intermembrane space (IMS) are transferred via the dinuclear copper A center (CU(A)) of subunit 2 and heme A of subunit 1 to the active site in subunit 1, a binuclear center (BNC) formed by heme A3 and copper B (CU(B)). The BNC reduces molecular oxygen to 2 water molecules using 4 electrons from cytochrome c in the IMS and 4 protons from the mitochondrial matrix. In Rattus norvegicus (Rat), this protein is Cytochrome c oxidase subunit 5A, mitochondrial (Cox5a).